A 656-amino-acid chain; its full sequence is Protein terminal ear1 (656 aa).

The RRM domain occupies serine 211–proline 283. Disordered stretches follow at residues phenylalanine 280–arginine 408 and leucine 576–aspartate 656. Over residues proline 288–arginine 299 the composition is skewed to basic residues. Residues proline 314 to serine 331 show a composition bias toward low complexity. Residues cysteine 346–glycine 358 are compositionally biased toward polar residues. Low complexity-rich tracts occupy residues alanine 377–valine 397, arginine 585–alanine 601, and proline 612–alanine 630. Residues aspartate 642–aspartate 656 show a composition bias toward basic and acidic residues.

Expressed below the shoot tip down the flanks of shoot apex in an alternating pattern. Not expressed in root tips, leaves or immature ears (female inflorescences).

Probable RNA-binding protein. Involved in the regulation of leaf initiation rate and shoot development. Seems to act more predominantly in the early stages of the leaf development, rather than in the later phase. In Zea mays (Maize), this protein is Protein terminal ear1 (TE1).